A 69-amino-acid chain; its full sequence is Neurotoxin Cex5 (69 aa).

Alanine 1 is a signal peptide. The LCN-type CS-alpha/beta domain occupies 2–67 (KDGYLVSKST…TYPIPGKSCG (66 aa)). 4 disulfides stabilise this stretch: cysteine 13–cysteine 66, cysteine 17–cysteine 42, cysteine 26–cysteine 47, and cysteine 30–cysteine 49. A Cysteine amide modification is found at cysteine 66. A propeptide spanning residues 67–69 (GKK) is cleaved from the precursor.

Belongs to the long (4 C-C) scorpion toxin superfamily. Sodium channel inhibitor family. Beta subfamily. Expressed by the venom gland.

Its subcellular location is the secreted. Functionally, beta toxins bind voltage-independently at site-4 of sodium channels (Nav) and shift the voltage of activation toward more negative potentials thereby affecting sodium channel activation and promoting spontaneous and repetitive firing. This chain is Neurotoxin Cex5, found in Centruroides exilicauda (Bark scorpion).